Here is a 290-residue protein sequence, read N- to C-terminus: Elongation factor Ts (290 aa).

The involved in Mg(2+) ion dislocation from EF-Tu stretch occupies residues 83-86; sequence TDFV.

This sequence belongs to the EF-Ts family.

The protein resides in the cytoplasm. In terms of biological role, associates with the EF-Tu.GDP complex and induces the exchange of GDP to GTP. It remains bound to the aminoacyl-tRNA.EF-Tu.GTP complex up to the GTP hydrolysis stage on the ribosome. This chain is Elongation factor Ts (tsf), found in Aquifex aeolicus (strain VF5).